The sequence spans 229 residues: Ribonuclease 3 (229 aa).

The RNase III domain maps to 5-127 (LARLERQLGY…LIGAIYLDAG (123 aa)). Glu-40 contributes to the Mg(2+) binding site. Residue Asp-44 is part of the active site. Residues Asp-113 and Glu-116 each contribute to the Mg(2+) site. Residue Glu-116 is part of the active site. One can recognise a DRBM domain in the interval 154–224 (DPKTRLQEFL…AAAALIALGV (71 aa)).

This sequence belongs to the ribonuclease III family. Homodimer. The cofactor is Mg(2+).

The protein resides in the cytoplasm. The catalysed reaction is Endonucleolytic cleavage to 5'-phosphomonoester.. Digests double-stranded RNA. Involved in the processing of primary rRNA transcript to yield the immediate precursors to the large and small rRNAs (23S and 16S). Processes some mRNAs, and tRNAs when they are encoded in the rRNA operon. Processes pre-crRNA and tracrRNA of type II CRISPR loci if present in the organism. The sequence is that of Ribonuclease 3 from Pseudomonas fluorescens (strain SBW25).